A 197-amino-acid polypeptide reads, in one-letter code: Xanthine phosphoribosyltransferase (197 aa).

2 residues coordinate xanthine: L20 and T27. 128 to 132 (ANGQA) lines the 5-phospho-alpha-D-ribose 1-diphosphate pocket. K156 lines the xanthine pocket.

This sequence belongs to the purine/pyrimidine phosphoribosyltransferase family. Xpt subfamily. As to quaternary structure, homodimer.

Its subcellular location is the cytoplasm. The enzyme catalyses XMP + diphosphate = xanthine + 5-phospho-alpha-D-ribose 1-diphosphate. The protein operates within purine metabolism; XMP biosynthesis via salvage pathway; XMP from xanthine: step 1/1. In terms of biological role, converts the preformed base xanthine, a product of nucleic acid breakdown, to xanthosine 5'-monophosphate (XMP), so it can be reused for RNA or DNA synthesis. This chain is Xanthine phosphoribosyltransferase, found in Lactococcus lactis subsp. lactis (strain IL1403) (Streptococcus lactis).